The chain runs to 593 residues: Mitoguardin 2 (593 aa).

Helical transmembrane passes span 11-31 (MIQALAMTVAEIPVFLYTTFG) and 42-62 (PGLRKVLFATALGTVALALAA). Disordered regions lie at residues 101-134 (KKGYSNRRVQSPSSKSNDTLSGISSIEPSKHSGS) and 195-228 (LSVGQRGDSGSTPTPGDGLRNPETASEALSEPES). The span at 107-123 (RRVQSPSSKSNDTLSGI) shows a compositional bias: polar residues. The span at 124-134 (SSIEPSKHSGS) shows a compositional bias: low complexity. S132 carries the post-translational modification Phosphoserine. T206 is modified (phosphothreonine). A phosphoserine mark is found at S220, S224, and S228. Position 273 is a phosphothreonine (T273). Residues S276 and S295 each carry the phosphoserine modification. Positions 292 to 298 (SFFSATE) match the FFAT motif. Residues 563-583 (ILLGYLGVPAASSIGLNGVLP) traverse the membrane as a helical segment.

It belongs to the mitoguardin family. Homodimer and heterodimer; forms heterodimers with MIGA1. Interacts with PLD6/MitoPLD. Interacts (via phosphorylated FFAT motif) with MOSPD2. In terms of processing, phosphorylation at Ser-295 of the FFAT motif activates interaction with MOSPD2.

It is found in the mitochondrion outer membrane. Regulator of mitochondrial fusion: acts by forming homo- and heterodimers at the mitochondrial outer membrane and facilitating the formation of PLD6/MitoPLD dimers. May act by regulating phospholipid metabolism via PLD6/MitoPLD. In Bos taurus (Bovine), this protein is Mitoguardin 2.